Here is a 206-residue protein sequence, read N- to C-terminus: Large ribosomal subunit protein bL25 (206 aa).

Positions 168 to 206 (DPEESVVTVEVPEDASESTAAPEAAAPAADAAAPAADAK) are disordered. Over residues 184–206 (ESTAAPEAAAPAADAAAPAADAK) the composition is skewed to low complexity.

The protein belongs to the bacterial ribosomal protein bL25 family. CTC subfamily. Part of the 50S ribosomal subunit; part of the 5S rRNA/L5/L18/L25 subcomplex. Contacts the 5S rRNA. Binds to the 5S rRNA independently of L5 and L18.

Functionally, this is one of the proteins that binds to the 5S RNA in the ribosome where it forms part of the central protuberance. The polypeptide is Large ribosomal subunit protein bL25 (Bifidobacterium longum (strain DJO10A)).